The chain runs to 457 residues: Argininosuccinate lyase (457 aa).

It belongs to the lyase 1 family. Argininosuccinate lyase subfamily.

It is found in the cytoplasm. It catalyses the reaction 2-(N(omega)-L-arginino)succinate = fumarate + L-arginine. It functions in the pathway amino-acid biosynthesis; L-arginine biosynthesis; L-arginine from L-ornithine and carbamoyl phosphate: step 3/3. The polypeptide is Argininosuccinate lyase (Staphylococcus carnosus (strain TM300)).